We begin with the raw amino-acid sequence, 237 residues long: MMKSQKKLLIKIIVVQCLLVLCVTSQDFDFFYFVQQWPASYCDTRRSCCYPTTGKPDEDFSIHGLWPNYKDGKWPQNCDRESSLDESEFSDLISTMEKNWPSLACPSSDGLKFWSHEWLKHGTCSALNQHAYFQTALDFKTKSNLLQNLNNAGIKPRNGDYYGVESIKKAIEKGVGHTPFIECNVDSQGNHQLYQVYLCVDSSASKFIDCPIFPHGGKCGSKIEFPSFSTNDDHDEF.

The propeptide occupies 1-24; sequence MMKSQKKLLIKIIVVQCLLVLCVT. Glutamine 36 contacts RNA. An intrachain disulfide couples cysteine 42 to cysteine 48. Residues histidine 63, phenylalanine 113, 116-117, and 120-121 contribute to the RNA site; these read HE and KH. The Proton donor role is filled by histidine 63. 3 disulfides stabilise this stretch: cysteine 78-cysteine 124, cysteine 183-cysteine 219, and cysteine 199-cysteine 210. The active site involves glutamate 117. Residue histidine 121 is the Proton acceptor of the active site.

It belongs to the RNase T2 family.

The protein localises to the cytoplasm. The enzyme catalyses a ribonucleotidyl-ribonucleotide-RNA + H2O = a 3'-end 3'-phospho-ribonucleotide-RNA + a 5'-end dephospho-ribonucleoside-RNA + H(+). The protein is Intracellular ribonuclease LX (RNALX) of Solanum lycopersicum (Tomato).